The following is a 389-amino-acid chain: Succinyl-diaminopimelate desuccinylase (389 aa).

Residue His72 participates in Zn(2+) binding. Asp74 is an active-site residue. Asp105 contributes to the Zn(2+) binding site. Glu144 functions as the Proton acceptor in the catalytic mechanism. Residues Glu145, Glu173, and His362 each coordinate Zn(2+).

It belongs to the peptidase M20A family. DapE subfamily. In terms of assembly, homodimer. Zn(2+) serves as cofactor. Requires Co(2+) as cofactor.

The catalysed reaction is N-succinyl-(2S,6S)-2,6-diaminopimelate + H2O = (2S,6S)-2,6-diaminopimelate + succinate. It participates in amino-acid biosynthesis; L-lysine biosynthesis via DAP pathway; LL-2,6-diaminopimelate from (S)-tetrahydrodipicolinate (succinylase route): step 3/3. Its function is as follows. Catalyzes the hydrolysis of N-succinyl-L,L-diaminopimelic acid (SDAP), forming succinate and LL-2,6-diaminopimelate (DAP), an intermediate involved in the bacterial biosynthesis of lysine and meso-diaminopimelic acid, an essential component of bacterial cell walls. The polypeptide is Succinyl-diaminopimelate desuccinylase (Rhodopseudomonas palustris (strain HaA2)).